We begin with the raw amino-acid sequence, 134 residues long: MSWQTYVDDHLMCDIEGHEGHRLTLAAIVGHDGSVWAQSATSPQFKPEEMNGIMTDFNEPGHLAPTGLHLGGTKYMVIQGEAGAVIRGKKGSGGITIKKTGQALVCGIYEEPVTPGQCNMVVERLGDYLLEQGL.

The cysteines at positions 13 and 118 are disulfide-linked. The Involved in PIP2 interaction signature appears at 84 to 100 (AVIRGKKGSGGITIKKT). Threonine 114 is modified (phosphothreonine).

Belongs to the profilin family. As to quaternary structure, occurs in many kinds of cells as a complex with monomeric actin in a 1:1 ratio. Post-translationally, phosphorylated by MAP kinases.

The protein localises to the cytoplasm. Its subcellular location is the cytoskeleton. Its function is as follows. Binds to actin and affects the structure of the cytoskeleton. At high concentrations, profilin prevents the polymerization of actin, whereas it enhances it at low concentrations. The polypeptide is Profilin-3 (Olea europaea (Common olive)).